The following is a 206-amino-acid chain: MRTKKLPALRVGVGGPVGSGKTTLLEMLCKAMRERYDLVAITNDIYTKEDQRLLTISGALPAERIMGVETGGCPHTAIREDASINLEAVDRMLAKFPDADVVFIESGGDNLAATFSPELSDLTIYVIDVAGGEKIPRKGGPGITKSDLLIINKTDLAPYVGASLEVMESDTRKMRGDRPFVMCNLRAQGGLDEVIRFIERQGMLAA.

15–22 (GPVGSGKT) serves as a coordination point for GTP.

The protein belongs to the SIMIBI class G3E GTPase family. UreG subfamily. In terms of assembly, homodimer. UreD, UreF and UreG form a complex that acts as a GTP-hydrolysis-dependent molecular chaperone, activating the urease apoprotein by helping to assemble the nickel containing metallocenter of UreC. The UreE protein probably delivers the nickel.

It is found in the cytoplasm. Its function is as follows. Facilitates the functional incorporation of the urease nickel metallocenter. This process requires GTP hydrolysis, probably effectuated by UreG. In Ralstonia pickettii (strain 12J), this protein is Urease accessory protein UreG.